Reading from the N-terminus, the 94-residue chain is Co-chaperonin GroES (94 aa).

This sequence belongs to the GroES chaperonin family. In terms of assembly, heptamer of 7 subunits arranged in a ring. Interacts with the chaperonin GroEL.

It localises to the cytoplasm. Together with the chaperonin GroEL, plays an essential role in assisting protein folding. The GroEL-GroES system forms a nano-cage that allows encapsulation of the non-native substrate proteins and provides a physical environment optimized to promote and accelerate protein folding. GroES binds to the apical surface of the GroEL ring, thereby capping the opening of the GroEL channel. This is Co-chaperonin GroES from Lactobacillus gasseri (strain ATCC 33323 / DSM 20243 / BCRC 14619 / CIP 102991 / JCM 1131 / KCTC 3163 / NCIMB 11718 / NCTC 13722 / AM63).